A 375-amino-acid polypeptide reads, in one-letter code: Putative actin-26 (375 aa).

Belongs to the actin family.

The protein localises to the cytoplasm. It localises to the cytoskeleton. The catalysed reaction is ATP + H2O = ADP + phosphate + H(+). Its function is as follows. Actins are highly conserved proteins that are involved in various types of cell motility and are ubiquitously expressed in all eukaryotic cells. Multiple isoforms are involved in various cellular functions such as cytoskeleton structure, cell mobility, chromosome movement and muscle contraction. The chain is Putative actin-26 (act26) from Dictyostelium discoideum (Social amoeba).